The following is a 336-amino-acid chain: Alpha-N-acetylgalactosaminide alpha-2,6-sialyltransferase 5 (336 aa).

At 1 to 8 the chain is on the cytoplasmic side; the sequence is MKTLMRHG. A helical; Signal-anchor for type II membrane protein transmembrane segment spans residues 9 to 29; the sequence is LAVCLVLTTMCTSLLLVYSSL. The Lumenal segment spans residues 30–336; it reads GSQKERPPQQ…VNHAEGKPVF (307 aa). Positions 34-76 are disordered; that stretch reads ERPPQQQQQQQQQQQQAATATGSTQLVESSPQPRRTAPAGPRQ. The segment covering 38 to 49 has biased composition (low complexity); the sequence is QQQQQQQQQQQQ. Polar residues predominate over residues 50–66; it reads AATATGSTQLVESSPQP. Cys96 and Cys245 are oxidised to a cystine. N-linked (GlcNAc...) asparagine glycosylation is found at Asn137 and Asn161.

The protein belongs to the glycosyltransferase 29 family. As to expression, high expression in forebrain and to a lesser extent in cerebellum. No expression in salivary gland, intestine, liver, kidney, heart, lung, thymus and spleen.

The protein resides in the golgi apparatus membrane. The enzyme catalyses a ganglioside GM1b (d18:1(4E)) + CMP-N-acetyl-beta-neuraminate = a ganglioside GD1alpha (d18:1(4E)) + CMP + H(+). It carries out the reaction N-acetyl-alpha-neuraminosyl-(2-&gt;3)-beta-D-galactosyl-(1-&gt;3)-N-acetyl-beta-D-glucosaminyl-(1-&gt;3)-beta-D-galactosyl-(1-&gt;4)-beta-D-glucosyl-(1&lt;-&gt;1')-N-acyl-sphing-4-enine + CMP-N-acetyl-beta-neuraminate = N-acetyl-alpha-neuraminosyl-(2-&gt;3)-beta-D-galactosyl-(1-&gt;3)-[N-acetyl-alpha-neuraminosyl-(2-&gt;6)]-N-acetyl-beta-D-glucosaminyl-(1-&gt;3)-beta-D-galactosyl-(1-&gt;4)-beta-D-glucosyl-(1&lt;-&gt;1')-N-acyl-sphing-4-enine + CMP + H(+). Its pathway is glycolipid biosynthesis. Predominantly catalyzes the biosynthesis of ganglioside GD1alpha from GM1b in the brain, by transferring the sialyl group (N-acetyl-alpha-neuraminyl or NeuAc) from CMP-NeuAc to the GalNAc residue on the NeuAc-alpha-2,3-Gal-beta-1,3-GalNAc sequence of GM1b. GD1alpha is a critical molecule in the communication and interaction between neuronal cells and their supportive cells, particularly in brain tissues, and functions as an adhesion molecule in the process of metastasis. Also shows activity towards sialyl Lc4Cer (N-acetyl-alpha-neuraminosyl-(2-&gt;3)-beta-D-galactosyl-(1-&gt;3)-N-acetyl-beta-D-glucosaminyl-(1-&gt;3)-beta-D-galactosyl-(1-&gt;4)-beta-D-glucosyl-(1&lt;-&gt;1')-N-acyl-sphing-4-enine) generating disialyl Lc4Cer, which can lead to the synthesis of disialyl Lewis a (Le(a)), suggested to be a cancer-associated antigen. This Mus musculus (Mouse) protein is Alpha-N-acetylgalactosaminide alpha-2,6-sialyltransferase 5 (St6galnac5).